The chain runs to 86 residues: uncharacterized protein (86 aa).

It to M.jannaschii MJ1173.

This is an uncharacterized protein from Methanosarcina mazei (strain ATCC BAA-159 / DSM 3647 / Goe1 / Go1 / JCM 11833 / OCM 88) (Methanosarcina frisia).